Consider the following 602-residue polypeptide: UvrABC system protein C (602 aa).

In terms of domain architecture, GIY-YIG spans 17-94 (TTSGCYKMYS…IKEYKPDYNI (78 aa)). The 36-residue stretch at 199–234 (SKLLDETEIKMKEAIKKEDFEAAIKLKETKRSLIEI) folds into the UVR domain.

The protein belongs to the UvrC family. In terms of assembly, interacts with UvrB in an incision complex.

It is found in the cytoplasm. The UvrABC repair system catalyzes the recognition and processing of DNA lesions. UvrC both incises the 5' and 3' sides of the lesion. The N-terminal half is responsible for the 3' incision and the C-terminal half is responsible for the 5' incision. This chain is UvrABC system protein C, found in Borrelia hermsii (strain HS1 / DAH).